A 257-amino-acid polypeptide reads, in one-letter code: Transcription factor bHLH55 (257 aa).

Positions 74–126 (NKRAKHKELERQRRQENTSLFKILRYLLPSQYIKGKRSSADHVLEAVNYIKDL) constitute a bHLH domain.

In terms of assembly, homodimer. Expressed in roots, leaves, stems, and flowers.

Its subcellular location is the nucleus. This is Transcription factor bHLH55 (BHLH55) from Arabidopsis thaliana (Mouse-ear cress).